A 256-amino-acid chain; its full sequence is Large ribosomal subunit protein eL8A (256 aa).

The disordered stretch occupies residues 1 to 37 (MAPGKKVAPAPFGAKSTKSNKTRNPLTHSTPKNFGIG). The span at 16 to 32 (STKSNKTRNPLTHSTPK) shows a compositional bias: polar residues.

The protein belongs to the eukaryotic ribosomal protein eL8 family. Component of the large ribosomal subunit (LSU). Mature yeast ribosomes consist of a small (40S) and a large (60S) subunit. The 40S small subunit contains 1 molecule of ribosomal RNA (18S rRNA) and 33 different proteins (encoded by 57 genes). The large 60S subunit contains 3 rRNA molecules (25S, 5.8S and 5S rRNA) and 46 different proteins (encoded by 81 genes).

Its subcellular location is the cytoplasm. Functionally, component of the ribosome, a large ribonucleoprotein complex responsible for the synthesis of proteins in the cell. The small ribosomal subunit (SSU) binds messenger RNAs (mRNAs) and translates the encoded message by selecting cognate aminoacyl-transfer RNA (tRNA) molecules. The large subunit (LSU) contains the ribosomal catalytic site termed the peptidyl transferase center (PTC), which catalyzes the formation of peptide bonds, thereby polymerizing the amino acids delivered by tRNAs into a polypeptide chain. The nascent polypeptides leave the ribosome through a tunnel in the LSU and interact with protein factors that function in enzymatic processing, targeting, and the membrane insertion of nascent chains at the exit of the ribosomal tunnel. The polypeptide is Large ribosomal subunit protein eL8A (Saccharomyces cerevisiae (strain ATCC 204508 / S288c) (Baker's yeast)).